Reading from the N-terminus, the 112-residue chain is Large ribosomal subunit protein bL17 (112 aa).

This sequence belongs to the bacterial ribosomal protein bL17 family. Part of the 50S ribosomal subunit. Contacts protein L32.

The chain is Large ribosomal subunit protein bL17 from Carboxydothermus hydrogenoformans (strain ATCC BAA-161 / DSM 6008 / Z-2901).